The following is a 1658-amino-acid chain: Silent chromatin protein ESC1 (1658 aa).

Over residues 36–54 (DSKMKDQHGYSRVHNDKYR) the composition is skewed to basic and acidic residues. Disordered regions lie at residues 36–76 (DSKM…SSHI) and 156–499 (TSFQ…LENE). 2 stretches are compositionally biased toward acidic residues: residues 205 to 214 (LENDEYELSE) and 245 to 254 (SNDEYAEEEG). Residues 262 to 286 (GQEQANVENATQISSSDSSEGQNYS) are compositionally biased toward polar residues. Over residues 289–305 (VEMELEDDIDVESDAEK) the composition is skewed to acidic residues. The span at 335 to 352 (VIEKYESDEHKVHQRYSE) shows a compositional bias: basic and acidic residues. The span at 365 to 375 (VDDESEDEESQ) shows a compositional bias: acidic residues. The span at 386–397 (VYHHNEHELDDK) shows a compositional bias: basic and acidic residues. A compositionally biased stretch (acidic residues) spans 398–407 (ELIEDIESSD). Low complexity predominate over residues 408-417 (SESQSAQESE). Basic and acidic residues-rich tracts occupy residues 425–435 (EYKMKNEKSTS), 442–461 (SESRDQGFAKDAYTKNKVEQ), and 471–482 (DDIIRSSLDKNF). Position 500 is a phosphothreonine (T500). A Phosphoserine modification is found at S532. Disordered regions lie at residues 550–584 (SRNSNCPQKEEQVSESYLGHSNGSNLSGRSLDESE) and 589–608 (LKDFTGENNNNLKTDRGDLS). The segment covering 568-577 (GHSNGSNLSG) has biased composition (polar residues). Phosphoserine is present on residues S579, S583, S608, and S662. Disordered regions lie at residues 770–819 (SKET…EDNT), 863–964 (EMSS…VKGT), and 1082–1115 (ENNTNMHDQVSQACSDSDRDQDSTAEKNVEGSAK). A compositionally biased stretch (polar residues) spans 800-812 (QSKNFPGVANSTD). A phosphoserine mark is found at S865 and S866. The span at 869–878 (ECVKQNDDGS) shows a compositional bias: basic and acidic residues. A compositionally biased stretch (polar residues) spans 879–905 (KTQISFSTDSPDNFQESNDNTEFSSTK). Phosphoserine occurs at positions 888 and 911. Basic and acidic residues predominate over residues 918 to 931 (SLKKELTKAEVVDK). Positions 932-956 (LDEEESEDSYEQDYADPEPGNDEGS) are enriched in acidic residues. 7 positions are modified to phosphoserine: S937, S1092, S1096, S1098, S1166, S1176, and S1178. A compositionally biased stretch (polar residues) spans 1082-1096 (ENNTNMHDQVSQACS). Residues 1097-1115 (DSDRDQDSTAEKNVEGSAK) show a composition bias toward basic and acidic residues. Polar residues predominate over residues 1197–1207 (STDASVNMKSV). Positions 1197–1216 (STDASVNMKSVSSKERDSDE) are disordered. S1214 and S1254 each carry phosphoserine. Positions 1261 to 1272 (VKDKENLHKSEE) are enriched in basic and acidic residues. Positions 1261 to 1315 (VKDKENLHKSEEPLVEGLQSEQHFEKKDHSENEEEFDTIYGDITSANIHSNAPDD) are disordered. S1290, S1326, and S1332 each carry phosphoserine. 2 disordered regions span residues 1334–1482 (RLIE…TSPE) and 1503–1658 (PATT…SVDK). The span at 1335–1366 (LIEDSRRGKNQEESDEVNTSRERDLTFEKSVN) shows a compositional bias: basic and acidic residues. Phosphoserine occurs at positions 1403, 1409, 1450, and 1454. Residues 1407-1423 (LNSEPEEAELYELEIEG) show a composition bias toward acidic residues. Over residues 1463 to 1479 (YPYSNSENITAEKSAPT) the composition is skewed to polar residues. Basic and acidic residues predominate over residues 1507 to 1537 (LEKHDKTNVTSVLDDRSEHLSSHDVDNEPHD). At S1539 the chain carries Phosphoserine. 2 stretches are compositionally biased toward basic and acidic residues: residues 1550 to 1564 (PEHQAVDIPVKVEVK) and 1575 to 1591 (VLEEQKPSMELINDKSS). 2 positions are modified to phosphoserine: S1590 and S1591. Basic residues predominate over residues 1607 to 1626 (TKAKKKSRKRNYNSRRRKRK). The segment covering 1648–1658 (RGQNTHPSVDK) has biased composition (polar residues).

Interacts with SIR4.

It is found in the nucleus. Its function is as follows. Involved in the clustering of telomeres at the nuclear periphery, forming discrete subcompartments that accumulate a complex of histone-binding silencing factors like SIR4. Required for SIR4-mediated anchoring and partitioning of plasmids. The protein is Silent chromatin protein ESC1 (ESC1) of Saccharomyces cerevisiae (strain ATCC 204508 / S288c) (Baker's yeast).